The sequence spans 225 residues: MLTKKQKNLLLFINKKLRASGVSPSYEEMKDSLNLKSKSGIHRLISALEERGFIRRLAHKARALEVIKLPETASANDIYNSFSPSVIKGGLDTENTNLNEMEIPVLGSIAAGTPVEAIQNEVSRIPLPSNLEKNGQYFGLKVQGDSMIEAGINEGDTVIIKRSDTADNGKIVVALIDEHEAMLKRIRRKGKTVALESANRNYETKIFGPDRVKVQGVLVSLYRNF.

Positions 26-46 (YEEMKDSLNLKSKSGIHRLIS) form a DNA-binding region, H-T-H motif. Residues Ser-146 and Lys-184 each act as for autocatalytic cleavage activity in the active site.

It belongs to the peptidase S24 family. As to quaternary structure, homodimer.

It catalyses the reaction Hydrolysis of Ala-|-Gly bond in repressor LexA.. Its function is as follows. Represses a number of genes involved in the response to DNA damage (SOS response), including recA and lexA. In the presence of single-stranded DNA, RecA interacts with LexA causing an autocatalytic cleavage which disrupts the DNA-binding part of LexA, leading to derepression of the SOS regulon and eventually DNA repair. In Pelagibacter ubique (strain HTCC1062), this protein is LexA repressor.